The chain runs to 465 residues: Tubulin gamma chain (465 aa).

144 to 150 (AGGTGSG) contacts GTP.

The protein belongs to the tubulin family.

It localises to the cytoplasm. The protein resides in the cytoskeleton. It is found in the microtubule organizing center. Its subcellular location is the spindle pole body. Tubulin is the major constituent of microtubules. The gamma chain is found at microtubule organizing centers (MTOC) such as the spindle poles or the centrosome, suggesting that it is involved in the minus-end nucleation of microtubule assembly. The polypeptide is Tubulin gamma chain (TUB4) (Candida glabrata (strain ATCC 2001 / BCRC 20586 / JCM 3761 / NBRC 0622 / NRRL Y-65 / CBS 138) (Yeast)).